We begin with the raw amino-acid sequence, 540 residues long: L-aspartate oxidase (540 aa).

Residues serine 16–alanine 19, lysine 38, serine 45–glycine 52, and aspartate 223 each bind FAD. Arginine 290 (proton donor/acceptor) is an active-site residue. FAD is bound by residues glutamate 375 and serine 391–leucine 392.

This sequence belongs to the FAD-dependent oxidoreductase 2 family. NadB subfamily. FAD is required as a cofactor.

It is found in the cytoplasm. The catalysed reaction is L-aspartate + O2 = iminosuccinate + H2O2. The enzyme catalyses fumarate + L-aspartate = iminosuccinate + succinate. The protein operates within cofactor biosynthesis; NAD(+) biosynthesis; iminoaspartate from L-aspartate (oxidase route): step 1/1. Its function is as follows. Catalyzes the oxidation of L-aspartate to iminoaspartate, the first step in the de novo biosynthesis of NAD(+). Can use either oxygen or fumarate as electron acceptors, which allows the enzyme to be functional under aerobic and anaerobic conditions. The polypeptide is L-aspartate oxidase (nadB) (Escherichia coli O157:H7).